The following is a 631-amino-acid chain: 1-deoxy-D-xylulose-5-phosphate synthase (631 aa).

Residues His72 and Gly113–Ala115 each bind thiamine diphosphate. Residue Asp144 coordinates Mg(2+). Thiamine diphosphate-binding positions include Gly145 to Ala146, Asn174, Tyr287, and Glu370. Asn174 serves as a coordination point for Mg(2+).

The protein belongs to the transketolase family. DXPS subfamily. Homodimer. Mg(2+) serves as cofactor. It depends on thiamine diphosphate as a cofactor.

The catalysed reaction is D-glyceraldehyde 3-phosphate + pyruvate + H(+) = 1-deoxy-D-xylulose 5-phosphate + CO2. Its pathway is metabolic intermediate biosynthesis; 1-deoxy-D-xylulose 5-phosphate biosynthesis; 1-deoxy-D-xylulose 5-phosphate from D-glyceraldehyde 3-phosphate and pyruvate: step 1/1. Catalyzes the acyloin condensation reaction between C atoms 2 and 3 of pyruvate and glyceraldehyde 3-phosphate to yield 1-deoxy-D-xylulose-5-phosphate (DXP). The sequence is that of 1-deoxy-D-xylulose-5-phosphate synthase from Prochlorococcus marinus (strain MIT 9515).